Consider the following 490-residue polypeptide: ATP synthase subunit alpha 1 (490 aa).

171-178 (GDNGLGKS) provides a ligand contact to ATP.

Belongs to the ATPase alpha/beta chains family. As to quaternary structure, F-type ATPases have 2 components, CF(1) - the catalytic core - and CF(0) - the membrane proton channel. CF(1) has five subunits: alpha(3), beta(3), gamma(1), delta(1), epsilon(1). CF(0) has three main subunits: a(1), b(2) and c(9-12). The alpha and beta chains form an alternating ring which encloses part of the gamma chain. CF(1) is attached to CF(0) by a central stalk formed by the gamma and epsilon chains, while a peripheral stalk is formed by the delta and b chains.

Its subcellular location is the cell inner membrane. The enzyme catalyses ATP + H2O + 4 H(+)(in) = ADP + phosphate + 5 H(+)(out). In terms of biological role, produces ATP from ADP in the presence of a proton gradient across the membrane. The alpha chain is a regulatory subunit. The chain is ATP synthase subunit alpha 1 from Legionella pneumophila (strain Corby).